The following is a 160-amino-acid chain: UPF0262 protein Mrad2831_3513 (160 aa).

Belongs to the UPF0262 family.

The polypeptide is UPF0262 protein Mrad2831_3513 (Methylobacterium radiotolerans (strain ATCC 27329 / DSM 1819 / JCM 2831 / NBRC 15690 / NCIMB 10815 / 0-1)).